The chain runs to 125 residues: Histone H2A (125 aa).

A compositionally biased stretch (basic residues) spans 1 to 18; sequence MSGRGKGGKVKGKSKTRS. Residues 1–23 are disordered; it reads MSGRGKGGKVKGKSKTRSSRAGL. N-acetylserine is present on S2. At Q104 the chain carries N5-methylglutamine.

It belongs to the histone H2A family. In terms of assembly, the nucleosome is a histone octamer containing two molecules each of H2A, H2B, H3 and H4 assembled in one H3-H4 heterotetramer and two H2A-H2B heterodimers. The octamer wraps approximately 147 bp of DNA.

Its subcellular location is the nucleus. It localises to the chromosome. Core component of nucleosome. Nucleosomes wrap and compact DNA into chromatin, limiting DNA accessibility to the cellular machineries which require DNA as a template. Histones thereby play a central role in transcription regulation, DNA repair, DNA replication and chromosomal stability. DNA accessibility is regulated via a complex set of post-translational modifications of histones, also called histone code, and nucleosome remodeling. The chain is Histone H2A from Sepia officinalis (Common cuttlefish).